Consider the following 352-residue polypeptide: Dihydroorotate dehydrogenase (quinone) (352 aa).

FMN contacts are provided by residues Ala68–Lys72 and Thr92. Lys72 provides a ligand contact to substrate. Asn117–Phe121 lines the substrate pocket. Residues Asn146 and Asn179 each coordinate FMN. Residue Asn179 participates in substrate binding. The active-site Nucleophile is the Ser182. Asn184 serves as a coordination point for substrate. Residues Lys215 and Thr243 each contribute to the FMN site. Asn244 to Thr245 provides a ligand contact to substrate. FMN-binding positions include Gly263, Gly292, and Tyr313–Ser314.

It belongs to the dihydroorotate dehydrogenase family. Type 2 subfamily. Monomer. The cofactor is FMN.

Its subcellular location is the cell membrane. It catalyses the reaction (S)-dihydroorotate + a quinone = orotate + a quinol. It functions in the pathway pyrimidine metabolism; UMP biosynthesis via de novo pathway; orotate from (S)-dihydroorotate (quinone route): step 1/1. Catalyzes the conversion of dihydroorotate to orotate with quinone as electron acceptor. This Sulfurimonas denitrificans (strain ATCC 33889 / DSM 1251) (Thiomicrospira denitrificans (strain ATCC 33889 / DSM 1251)) protein is Dihydroorotate dehydrogenase (quinone).